The primary structure comprises 78 residues: Translational regulator CsrA (78 aa).

Belongs to the CsrA/RsmA family. In terms of assembly, homodimer; the beta-strands of each monomer intercalate to form a hydrophobic core, while the alpha-helices form wings that extend away from the core.

It localises to the cytoplasm. Its function is as follows. A translational regulator that binds mRNA to regulate translation initiation and/or mRNA stability. Usually binds in the 5'-UTR at or near the Shine-Dalgarno sequence preventing ribosome-binding, thus repressing translation. Its main target seems to be the major flagellin gene, while its function is anatagonized by FliW. This is Translational regulator CsrA from Geobacter metallireducens (strain ATCC 53774 / DSM 7210 / GS-15).